The primary structure comprises 1235 residues: JNK-interacting protein 3 (1235 aa).

The disordered stretch occupies residues 1–22 (MMDNDDALLNNGGPQSGAETVY). The region spanning 25-113 (EDNNMVMSEK…VTQYEREKSA (89 aa)) is the RH1 domain. Residues 84–184 (RINQEQDVEL…NKLHERYTEL (101 aa)) adopt a coiled-coil conformation. The tract at residues 278–325 (GAATDSLQQQHQATSPQSPPDTSPVVPNVPPANVGRSTTKKEQRSDNN) is disordered. Over residues 282–293 (DSLQQQHQATSP) the composition is skewed to polar residues. Residues 294–307 (QSPPDTSPVVPNVP) are compositionally biased toward pro residues. The stretch at 366–493 (GKEVENLIME…AVRLTEILRA (128 aa)) forms a coiled coil. An RH2 domain is found at 456–526 (RKRFTRVEMA…TPSNRPTERI (71 aa)). Disordered stretches follow at residues 520 to 572 (NRPT…MHPA), 813 to 852 (KPKS…PVNA), and 869 to 897 (PGAP…STGS). The span at 529-543 (GLGGGPMFRNTGGGS) shows a compositional bias: gly residues. Low complexity-rich tracts occupy residues 544-555 (PAHSHGSPSRGS) and 821-830 (NSNSKPQQQQ). Residues 874–897 (RLSSGNSGSDGNQANNNNSSSTGS) are compositionally biased toward polar residues.

Belongs to the JIP scaffold family. As to quaternary structure, forms homo- and heterooligomeric complexes. Binds the TPR motif-containing C-terminal of kinesin light chain, Klc. Pre-assembled syd scaffolding complexes are then transported as a cargo of kinesin, to the required subcellular location.

The protein localises to the cytoplasm. In terms of biological role, the JNK-interacting protein (JIP) group of scaffold proteins selectively mediates JNK-signaling by aggregating specific components of the MAPK cascade to form a functional JNK signaling module. May function as a regulator of vesicle transport, through interactions with the JNK-signaling components and motor proteins. Syd is required for efficient kinesin-I mediated axonal transport. The protein is JNK-interacting protein 3 of Drosophila pseudoobscura pseudoobscura (Fruit fly).